Consider the following 329-residue polypeptide: DNA-directed RNA polymerase subunit alpha (329 aa).

The segment at Met1–Arg235 is alpha N-terminal domain (alpha-NTD). Residues Phe249–Glu329 form an alpha C-terminal domain (alpha-CTD) region.

It belongs to the RNA polymerase alpha chain family. As to quaternary structure, homodimer. The RNAP catalytic core consists of 2 alpha, 1 beta, 1 beta' and 1 omega subunit. When a sigma factor is associated with the core the holoenzyme is formed, which can initiate transcription.

The enzyme catalyses RNA(n) + a ribonucleoside 5'-triphosphate = RNA(n+1) + diphosphate. DNA-dependent RNA polymerase catalyzes the transcription of DNA into RNA using the four ribonucleoside triphosphates as substrates. In Enterobacter sp. (strain 638), this protein is DNA-directed RNA polymerase subunit alpha.